We begin with the raw amino-acid sequence, 86 residues long: uncharacterized protein (86 aa).

A signal peptide spans 1–22; it reads MKTINTVVAAMALSTLSFGVFA.

The protein belongs to the BhsA/McbA family.

It localises to the periplasm. This is an uncharacterized protein from Escherichia coli O6:H1 (strain CFT073 / ATCC 700928 / UPEC).